We begin with the raw amino-acid sequence, 478 residues long: Transcript termination protein A18 (478 aa).

In terms of domain architecture, Helicase ATP-binding spans 98 to 254 (KLSTHRPMYM…NDVVNVLKVS (157 aa)). 111 to 118 (LSCGFGKT) is an ATP binding site. The short motif at 204–207 (DESH) is the DESH box element. The Helicase C-terminal domain maps to 302 to 468 (PRNNLIVETV…GIEGTKEEPV (167 aa)).

The protein belongs to the helicase family. Poxviruses subfamily. Interacts with G2. Might be part of a transcription complex composed at least of G2, A18, and H5.

The protein localises to the virion. DNA helicase which seems to act as a postreplicative transcription termination factor. Involved in ATP-dependent release of nascent RNA. Forms a stable complex with single-stranded DNA, and to a lesser extent RNA. The protein is Transcript termination protein A18 of Rabbit fibroma virus (strain Kasza) (RFV).